A 105-amino-acid chain; its full sequence is Large ribosomal subunit protein bL21 (105 aa).

This sequence belongs to the bacterial ribosomal protein bL21 family. As to quaternary structure, part of the 50S ribosomal subunit. Contacts protein L20.

Functionally, this protein binds to 23S rRNA in the presence of protein L20. This chain is Large ribosomal subunit protein bL21, found in Rickettsia typhi (strain ATCC VR-144 / Wilmington).